The primary structure comprises 264 residues: Small ribosomal subunit protein eS1 (264 aa).

Residues 233–264 are disordered; sequence GEGGGAGKPSGDEAGAKVERADGYEPPVQESV. Residues 242-255 are compositionally biased toward basic and acidic residues; sequence SGDEAGAKVERADG.

The protein belongs to the eukaryotic ribosomal protein eS1 family. As to quaternary structure, component of the small ribosomal subunit. Mature ribosomes consist of a small (40S) and a large (60S) subunit. The 40S subunit contains about 33 different proteins and 1 molecule of RNA (18S). The 60S subunit contains about 49 different proteins and 3 molecules of RNA (25S, 5.8S and 5S).

It localises to the cytoplasm. The sequence is that of Small ribosomal subunit protein eS1 from Eimeria tenella (Coccidian parasite).